Reading from the N-terminus, the 211-residue chain is Thiamine-phosphate synthase (211 aa).

Residues 37 to 41 (QLRIK) and Asn69 each bind 4-amino-2-methyl-5-(diphosphooxymethyl)pyrimidine. Mg(2+) is bound by residues Asp70 and Asp89. Ser108 serves as a coordination point for 4-amino-2-methyl-5-(diphosphooxymethyl)pyrimidine. 2-[(2R,5Z)-2-carboxy-4-methylthiazol-5(2H)-ylidene]ethyl phosphate is bound at residue 134-136 (TQT). Lys137 contributes to the 4-amino-2-methyl-5-(diphosphooxymethyl)pyrimidine binding site. Residues Gly166 and 186-187 (VS) contribute to the 2-[(2R,5Z)-2-carboxy-4-methylthiazol-5(2H)-ylidene]ethyl phosphate site.

This sequence belongs to the thiamine-phosphate synthase family. It depends on Mg(2+) as a cofactor.

The enzyme catalyses 2-[(2R,5Z)-2-carboxy-4-methylthiazol-5(2H)-ylidene]ethyl phosphate + 4-amino-2-methyl-5-(diphosphooxymethyl)pyrimidine + 2 H(+) = thiamine phosphate + CO2 + diphosphate. The catalysed reaction is 2-(2-carboxy-4-methylthiazol-5-yl)ethyl phosphate + 4-amino-2-methyl-5-(diphosphooxymethyl)pyrimidine + 2 H(+) = thiamine phosphate + CO2 + diphosphate. It catalyses the reaction 4-methyl-5-(2-phosphooxyethyl)-thiazole + 4-amino-2-methyl-5-(diphosphooxymethyl)pyrimidine + H(+) = thiamine phosphate + diphosphate. It participates in cofactor biosynthesis; thiamine diphosphate biosynthesis; thiamine phosphate from 4-amino-2-methyl-5-diphosphomethylpyrimidine and 4-methyl-5-(2-phosphoethyl)-thiazole: step 1/1. Functionally, condenses 4-methyl-5-(beta-hydroxyethyl)thiazole monophosphate (THZ-P) and 2-methyl-4-amino-5-hydroxymethyl pyrimidine pyrophosphate (HMP-PP) to form thiamine monophosphate (TMP). The protein is Thiamine-phosphate synthase of Salmonella schwarzengrund (strain CVM19633).